A 246-amino-acid chain; its full sequence is Proteasome subunit beta type-4 (246 aa).

Residues 1 to 23 (MTTFSVPIDNGDSMKIAEEESQR) constitute a propeptide that is removed on maturation. The active-site Nucleophile is the Thr24.

The protein belongs to the peptidase T1B family. As to quaternary structure, component of the 20S core complex of the 26S proteasome. The 26S proteasome is composed of a core protease (CP), known as the 20S proteasome, capped at one or both ends by the 19S regulatory particle (RP/PA700). The 20S proteasome core is composed of 28 subunits that are arranged in four stacked rings, resulting in a barrel-shaped structure. The two end rings are each formed by seven alpha subunits, and the two central rings are each formed by seven beta subunits. The catalytic chamber with the active sites is on the inside of the barrel. Ubiquitous low levels, higher expression in siliques and flowers.

The protein localises to the cytoplasm. The protein resides in the nucleus. In terms of biological role, non-catalytic component of the proteasome, a multicatalytic proteinase complex which is characterized by its ability to cleave peptides with Arg, Phe, Tyr, Leu, and Glu adjacent to the leaving group at neutral or slightly basic pH. The proteasome has an ATP-dependent proteolytic activity. In Arabidopsis thaliana (Mouse-ear cress), this protein is Proteasome subunit beta type-4 (PBG1).